We begin with the raw amino-acid sequence, 199 residues long: MAQLFFRYGAMSSGKSIEILKVAHNYEAQGRKIALMTSNVDDRSGVGTVASRIGLHRKAVPISEDLDLFNYVSELNKSDVESGNGRVACVLIDEAQFLKRHHVLECAKIVDELKIPVMAFGLKNDFQNHLFEGSENLLIFADKVEEMKTICHYCGHKATMNLRINSGKPVYEGEQVQIGGDESYYPVCRFHYFHPNKQR.

ATP is bound by residues 9-16 (GAMSSGKS) and 93-96 (DEAQ). Catalysis depends on Glu94, which acts as the Proton acceptor. Residues Cys151, Cys154, Cys188, and His191 each contribute to the Zn(2+) site.

The protein belongs to the thymidine kinase family. In terms of assembly, homotetramer.

The protein resides in the cytoplasm. The enzyme catalyses thymidine + ATP = dTMP + ADP + H(+). The sequence is that of Thymidine kinase from Lactobacillus johnsonii (strain CNCM I-12250 / La1 / NCC 533).